Here is a 637-residue protein sequence, read N- to C-terminus: Nuclear receptor subfamily 2 group C member 1-B (637 aa).

The segment at residues 149–224 (VELCVVCGDK…LGMKQDSVQC (76 aa)) is a DNA-binding region (nuclear receptor). 2 consecutive NR C4-type zinc fingers follow at residues 152-172 (CVVC…CEGC) and 188-207 (CRGS…CQYC). Residues 383 to 624 (CVGSGSNLLP…SIIPYILRME (242 aa)) enclose the NR LBD domain.

Belongs to the nuclear hormone receptor family. NR2 subfamily.

Its subcellular location is the nucleus. Orphan nuclear receptor. Binds the IR7 element in the promoter of its own gene in an autoregulatory negative feedback mechanism. Primarily repressor of a broad range of genes. Binds to hormone response elements (HREs) consisting of two 5'-AGGTCA-3' half site direct repeat consensus sequences. This is Nuclear receptor subfamily 2 group C member 1-B (nr2c1-b) from Xenopus laevis (African clawed frog).